The sequence spans 213 residues: Protein big brother (213 aa).

Belongs to the CBF-beta family.

Its subcellular location is the nucleus. Its function is as follows. Regulates the DNA-binding properties of Runt. This is Protein big brother (Bgb) from Drosophila melanogaster (Fruit fly).